Reading from the N-terminus, the 95-residue chain is Aspartyl/glutamyl-tRNA(Asn/Gln) amidotransferase subunit C (95 aa).

Belongs to the GatC family. As to quaternary structure, heterotrimer of A, B and C subunits.

The catalysed reaction is L-glutamyl-tRNA(Gln) + L-glutamine + ATP + H2O = L-glutaminyl-tRNA(Gln) + L-glutamate + ADP + phosphate + H(+). It carries out the reaction L-aspartyl-tRNA(Asn) + L-glutamine + ATP + H2O = L-asparaginyl-tRNA(Asn) + L-glutamate + ADP + phosphate + 2 H(+). Functionally, allows the formation of correctly charged Asn-tRNA(Asn) or Gln-tRNA(Gln) through the transamidation of misacylated Asp-tRNA(Asn) or Glu-tRNA(Gln) in organisms which lack either or both of asparaginyl-tRNA or glutaminyl-tRNA synthetases. The reaction takes place in the presence of glutamine and ATP through an activated phospho-Asp-tRNA(Asn) or phospho-Glu-tRNA(Gln). The protein is Aspartyl/glutamyl-tRNA(Asn/Gln) amidotransferase subunit C of Campylobacter concisus (strain 13826).